The chain runs to 395 residues: Nucleoside diphosphate kinase homolog 7 (395 aa).

The DM10 domain maps to 22-110; that stretch reads QSERFAFIAE…YTARQLGSRK (89 aa).

The protein belongs to the NDK family. In terms of assembly, component of sperm flagellar doublet microtubules. Component of the gamma-tubulin ring complex.

Its subcellular location is the cytoplasm. It localises to the cytoskeleton. The protein resides in the microtubule organizing center. It is found in the centrosome. The protein localises to the nucleus. Its subcellular location is the spindle. It localises to the cilium axoneme. The protein resides in the flagellum axoneme. It is found in the cell projection. The protein localises to the cilium. In terms of biological role, possesses an intrinsic kinase activity. Displays 3'-5' exonuclease activity with a preference for single-stranded DNA. Does not seem to have nucleoside diphosphate kinase activity. Functional component of the gamma-tubulin ring complex, implicated in the regulation of the microtubule-nucleating activity of the gamma-tubulin ring complex in centrosomes, in a kinase activity-dependent manner. Part of the dynein-decorated doublet microtubules (DMTs) in cilia axoneme, which is required for motile cilia beating. The sequence is that of Nucleoside diphosphate kinase homolog 7 from Mus musculus (Mouse).